A 147-amino-acid polypeptide reads, in one-letter code: Arginine repressor (147 aa).

The protein belongs to the ArgR family.

The protein localises to the cytoplasm. It participates in amino-acid biosynthesis; L-arginine biosynthesis [regulation]. Its function is as follows. Regulates arginine biosynthesis genes. This Chlamydia felis (strain Fe/C-56) (Chlamydophila felis) protein is Arginine repressor.